The primary structure comprises 239 residues: ATP synthase subunit a (239 aa).

A run of 5 helical transmembrane segments spans residues 17–37 (GTVC…VYFF), 75–95 (FHLL…IGLI), 113–133 (DPFV…LFGV), 182–202 (LLTL…PLAI), and 206–226 (MVWI…FVTL).

It belongs to the ATPase A chain family. In terms of assembly, F-type ATPases have 2 components, CF(1) - the catalytic core - and CF(0) - the membrane proton channel. CF(1) has five subunits: alpha(3), beta(3), gamma(1), delta(1), epsilon(1). CF(0) has three main subunits: a(1), b(2) and c(9-12). The alpha and beta chains form an alternating ring which encloses part of the gamma chain. CF(1) is attached to CF(0) by a central stalk formed by the gamma and epsilon chains, while a peripheral stalk is formed by the delta and b chains.

It localises to the cell membrane. Its function is as follows. Key component of the proton channel; it plays a direct role in the translocation of protons across the membrane. The sequence is that of ATP synthase subunit a from Enterococcus hirae (strain ATCC 9790 / DSM 20160 / JCM 8729 / LMG 6399 / NBRC 3181 / NCIMB 6459 / NCDO 1258 / NCTC 12367 / WDCM 00089 / R).